Here is a 391-residue protein sequence, read N- to C-terminus: Leucine-rich repeat-containing protein 74B (391 aa).

The interval 1–38 is disordered; that stretch reads MKGPCEVQKNEDQEGEAAATGPQAETLEAERSWTADSH. Over residues 28–38 the composition is skewed to basic and acidic residues; that stretch reads EAERSWTADSH. LRR repeat units follow at residues 106-126, 134-154, 162-182, 190-211, 218-239, 246-259, 274-294, 302-323, and 332-354; these read YIKRLDLRDNGLCGAGAEALA, IISDVDLSENQIGAAGLQAIC, TVEKMQLQGNRLEEQAAQHLA, GLKSLDLSYNQLNDLAGEILGP, GLTELNLSWNHLRGLGATAFAR, FLKVLDISHNGFGD, VLEELNMRNNRISVSGALKLG, TLRILIISKNPIRSDGCVGLLK, and ALELLDVSDIQVSRECEDLASSM. A disordered region spans residues 371-391; it reads KDWPQASTPSQPASAPSDSGL. Low complexity predominate over residues 374–391; sequence PQASTPSQPASAPSDSGL.

This is Leucine-rich repeat-containing protein 74B from Mus musculus (Mouse).